The following is a 771-amino-acid chain: Hyperosmolality-gated Ca2+ permeable channel 1.3 (771 aa).

Residues Ile7 to Ile27 form a helical membrane-spanning segment. Ser54 is subject to Phosphoserine. 9 consecutive transmembrane segments (helical) span residues Ile101 to Val121, Phe158 to Lys178, Leu375 to Val395, Phe427 to Met447, Tyr467 to Glu487, Ala512 to Leu532, Pro584 to Phe604, Ile630 to Ala650, and Ala651 to Cys671. The disordered stretch occupies residues Val744–Lys771. Polar residues predominate over residues Arg751–Lys771.

It belongs to the CSC1 (TC 1.A.17) family. Post-translationally, phosphorylated at Ser-54 by BIK1 in response to pathogen-associated molecular pattern (PAMP) perception, promoting its activation. As to expression, preferentially expressed in guard cells.

Its subcellular location is the cell membrane. It carries out the reaction Ca(2+)(in) = Ca(2+)(out). Its activity is regulated as follows. Activated following phosphorylation at Ser-54 by BIK1. Its function is as follows. Calcium-permeable channel that plays a key role in plant stomatal immunity. In response to pathogen-associated molecular pattern (PAMP) perception, phosphorylated and activated by BIK1, triggering rapid influx of calcium ions across the plasma membrane, leading to stomatal closure. In Arabidopsis thaliana (Mouse-ear cress), this protein is Hyperosmolality-gated Ca2+ permeable channel 1.3.